The following is a 139-amino-acid chain: Protein FAM237B (139 aa).

The signal sequence occupies residues 1–24; the sequence is MCFATRRWFYLHLGCMMLINLVNA. Met-112 is modified (methionine amide). Positions 113 to 139 are cleaved as a propeptide — removed in the mature form; that stretch reads GRRQVMPPKYNFPQKITGGNLNVYLRE.

The active form requires C-terminal amidation and disulfide bond formation.

Its subcellular location is the secreted. Its function is as follows. May be capable of activating GPR83 via the GNAQ signaling pathway. The protein is Protein FAM237B of Homo sapiens (Human).